We begin with the raw amino-acid sequence, 542 residues long: Mitochondrial distribution and morphology protein 34 (542 aa).

The SMP-LTD domain occupies 1-216 (MSFRFNKGAF…LPSVIFSMSQ (216 aa)). Disordered regions lie at residues 27 to 58 (LNSK…TRGP) and 372 to 435 (SSGD…TTAV). Low complexity predominate over residues 31 to 48 (TQSSSQTAPANTTNSAAT). A compositionally biased stretch (basic and acidic residues) spans 49–58 (DEVKQETRGP). The segment covering 379–394 (IRRRKIKMGKKSKSKK) has biased composition (basic residues). Low complexity predominate over residues 403 to 414 (SSPTVVMPSSPS).

It belongs to the MDM34 family. Component of the ER-mitochondria encounter structure (ERMES) or MDM complex, composed of MMM1, MDM10, MDM12 and MDM34.

Its subcellular location is the mitochondrion outer membrane. Its function is as follows. Component of the ERMES/MDM complex, which serves as a molecular tether to connect the endoplasmic reticulum (ER) and mitochondria. Components of this complex are involved in the control of mitochondrial shape and protein biogenesis, and function in nonvesicular lipid trafficking between the ER and mitochondria. MDM34 is required for the interaction of the ER-resident membrane protein MMM1 and the outer mitochondrial membrane-resident beta-barrel protein MDM10. The sequence is that of Mitochondrial distribution and morphology protein 34 from Lachancea thermotolerans (strain ATCC 56472 / CBS 6340 / NRRL Y-8284) (Yeast).